We begin with the raw amino-acid sequence, 872 residues long: Metabotropic glutamate receptor 2 (872 aa).

Positions 1–18 are cleaved as a signal peptide; sequence MESLLGFLALLLLWGAVA. Residues 19 to 567 lie on the Extracellular side of the membrane; it reads EGPAKKVLTL…QEYIRWGDAW (549 aa). A disulfide bridge connects residues C50 and C92. R57, R61, S145, A166, and T168 together coordinate L-glutamate. N-linked (GlcNAc...) asparagine glycans are attached at residues N203 and N286. Cystine bridges form between C234-C518, C355-C362, C400-C407, C500-C519, C504-C522, C525-C537, and C540-C553. An L-glutamate-binding site is contributed by D295. The N-linked (GlcNAc...) asparagine glycan is linked to N338. K377 serves as a coordination point for L-glutamate. N402 is a glycosylation site (N-linked (GlcNAc...) asparagine). An N-linked (GlcNAc...) asparagine glycan is attached at N547. A helical transmembrane segment spans residues 568–590; that stretch reads AVGPVTIACLGALATLFVLGVFV. Residues 591–604 are Cytoplasmic-facing; it reads RHNATPVVKASGRE. The helical transmembrane segment at 605-625 threads the bilayer; it reads LCYILLGGVFLCYCMTFVFIA. The Extracellular segment spans residues 626 to 636; sequence KPSTAVCTLRR. A disulfide bridge connects residues C632 and C721. Residues 637-655 form a helical membrane-spanning segment; sequence LGLGTAFSVCYSALLTKTN. At 656-679 the chain is on the cytoplasmic side; it reads RIARIFGGAREGAQRPRFISPASQ. Positions 677-685 are important for interaction with HTR2A; that stretch reads ASQVAICLA. Residues 680–700 traverse the membrane as a helical segment; the sequence is VAICLALISGQLLIVAAWLVV. Residues 701 to 725 are Extracellular-facing; that stretch reads EAPGTGKETAPERREVVTLRCNHRD. The helical transmembrane segment at 726 to 747 threads the bilayer; sequence ASMLGSLAYNVLLIALCTLYAF. Over 748–760 the chain is Cytoplasmic; the sequence is KTRKCPENFNEAK. The helical transmembrane segment at 761-783 threads the bilayer; the sequence is FIGFTMYTTCIIWLAFLPIFYVT. The Extracellular segment spans residues 784 to 793; the sequence is SSDYRVQTTT. Residues 794 to 819 traverse the membrane as a helical segment; it reads MCVSVSLSGSVVLGCLFAPKLHIILF. Residues 820–872 are Cytoplasmic-facing; the sequence is QPQKNVVSHRAPTSRFGSAAPRASANLGQGSGSQFVPTVCNGREVVDSTTSSL.

This sequence belongs to the G-protein coupled receptor 3 family. As to quaternary structure, forms heterodimers with GRM3 or GRM4. Interacts with GNAI1. Interacts with TAMALIN. Interacts with HTR2A. As to expression, is widely distributed in the CNS and prominent expression is seen in Golgi cells of the cerebellum and some particular neuronal cells in other brain regions.

It is found in the cell membrane. Its subcellular location is the synapse. The protein resides in the cell projection. It localises to the dendrite. Its function is as follows. Dimeric G protein-coupled receptor which is activated by the excitatory neurotransmitter L-glutamate. Plays critical roles in modulating synaptic transmission and neuronal excitability. Upon activation by glutamate, inhibits presynaptic calcium channels, reducing further glutamate release and dampening excitatory signaling. Mechanistically, ligand binding causes a conformation change that triggers signaling via guanine nucleotide-binding proteins (G proteins) and modulates the activity of down-stream effectors, such as adenylate cyclase. May mediate suppression of neurotransmission or may be involved in synaptogenesis or synaptic stabilization. The chain is Metabotropic glutamate receptor 2 (Grm2) from Rattus norvegicus (Rat).